We begin with the raw amino-acid sequence, 227 residues long: Probable chorismate pyruvate-lyase (227 aa).

Residues Arg75, Leu113, and Glu173 each contribute to the substrate site. The interval 192 to 227 (SGDWSAHPRVREHGRPLEHTASRAHPATRASDEQRR) is disordered. Residues 200 to 212 (RVREHGRPLEHTA) are compositionally biased toward basic and acidic residues.

This sequence belongs to the UbiC family.

It localises to the cytoplasm. The catalysed reaction is chorismate = 4-hydroxybenzoate + pyruvate. It participates in cofactor biosynthesis; ubiquinone biosynthesis. Removes the pyruvyl group from chorismate, with concomitant aromatization of the ring, to provide 4-hydroxybenzoate (4HB) for the ubiquinone pathway. The sequence is that of Probable chorismate pyruvate-lyase from Paraburkholderia xenovorans (strain LB400).